Reading from the N-terminus, the 266-residue chain is MQRINALTIAGTDPSGGAGIQADLKTFSALGAYGCSVITALVAQNTCGVQSVYRIEPDFVAAQLDSVFSDVRIDTTKIGMLAETDIVEAVAERLQRHHVRNVVLDTVMLAKSGDPLLSPSAIETLRVRLLPQVSLITPNLPEAAALLDAPHARTEQEMLAQGRALLAMGCEAVLMKGGHLEDAQSPDWLFTREGEQRFSAPRVNTKNTHGTGCTLSAALAALRPRHRSWGETVNEAKAWLSAALAQADTLEVGKGIGPVHHFHAWW.

4-amino-5-hydroxymethyl-2-methylpyrimidine is bound at residue glutamine 44.

The protein belongs to the ThiD family. In terms of assembly, homodimer.

It carries out the reaction 4-amino-5-hydroxymethyl-2-methylpyrimidine + ATP = 4-amino-2-methyl-5-(phosphooxymethyl)pyrimidine + ADP + H(+). The enzyme catalyses 4-amino-2-methyl-5-(phosphooxymethyl)pyrimidine + ATP = 4-amino-2-methyl-5-(diphosphooxymethyl)pyrimidine + ADP. Its pathway is cofactor biosynthesis; thiamine diphosphate biosynthesis; 4-amino-2-methyl-5-diphosphomethylpyrimidine from 5-amino-1-(5-phospho-D-ribosyl)imidazole: step 2/3. It functions in the pathway cofactor biosynthesis; thiamine diphosphate biosynthesis; 4-amino-2-methyl-5-diphosphomethylpyrimidine from 5-amino-1-(5-phospho-D-ribosyl)imidazole: step 3/3. Catalyzes the phosphorylation of hydroxymethylpyrimidine phosphate (HMP-P) to HMP-PP, and of HMP to HMP-P. This is Hydroxymethylpyrimidine/phosphomethylpyrimidine kinase (thiD) from Salmonella typhimurium (strain LT2 / SGSC1412 / ATCC 700720).